Reading from the N-terminus, the 232-residue chain is Phosphatidylserine decarboxylase proenzyme (232 aa).

S190 acts as the Schiff-base intermediate with substrate; via pyruvic acid in catalysis. The residue at position 190 (S190) is a Pyruvic acid (Ser); by autocatalysis.

It belongs to the phosphatidylserine decarboxylase family. PSD-A subfamily. Heterodimer of a large membrane-associated beta subunit and a small pyruvoyl-containing alpha subunit. Pyruvate serves as cofactor. Post-translationally, is synthesized initially as an inactive proenzyme. Formation of the active enzyme involves a self-maturation process in which the active site pyruvoyl group is generated from an internal serine residue via an autocatalytic post-translational modification. Two non-identical subunits are generated from the proenzyme in this reaction, and the pyruvate is formed at the N-terminus of the alpha chain, which is derived from the carboxyl end of the proenzyme. The post-translation cleavage follows an unusual pathway, termed non-hydrolytic serinolysis, in which the side chain hydroxyl group of the serine supplies its oxygen atom to form the C-terminus of the beta chain, while the remainder of the serine residue undergoes an oxidative deamination to produce ammonia and the pyruvoyl prosthetic group on the alpha chain.

It is found in the cell membrane. The enzyme catalyses a 1,2-diacyl-sn-glycero-3-phospho-L-serine + H(+) = a 1,2-diacyl-sn-glycero-3-phosphoethanolamine + CO2. The protein operates within phospholipid metabolism; phosphatidylethanolamine biosynthesis; phosphatidylethanolamine from CDP-diacylglycerol: step 2/2. Catalyzes the formation of phosphatidylethanolamine (PtdEtn) from phosphatidylserine (PtdSer). This chain is Phosphatidylserine decarboxylase proenzyme, found in Rhizobium etli (strain ATCC 51251 / DSM 11541 / JCM 21823 / NBRC 15573 / CFN 42).